Here is a 180-residue protein sequence, read N- to C-terminus: UPF0227 protein Shew_1627 (180 aa).

This sequence belongs to the UPF0227 family.

The sequence is that of UPF0227 protein Shew_1627 from Shewanella loihica (strain ATCC BAA-1088 / PV-4).